The primary structure comprises 210 residues: Ribosomal RNA large subunit methyltransferase E (210 aa).

S-adenosyl-L-methionine-binding residues include Gly-61, Trp-63, Asp-81, Asp-97, and Asp-122. The active-site Proton acceptor is the Lys-162. Residues 187 to 196 (KPEASRKRSP) show a composition bias toward basic and acidic residues. The interval 187-210 (KPEASRKRSPEVYALGQGKRAHMK) is disordered.

The protein belongs to the class I-like SAM-binding methyltransferase superfamily. RNA methyltransferase RlmE family.

The protein resides in the cytoplasm. It carries out the reaction uridine(2552) in 23S rRNA + S-adenosyl-L-methionine = 2'-O-methyluridine(2552) in 23S rRNA + S-adenosyl-L-homocysteine + H(+). Functionally, specifically methylates the uridine in position 2552 of 23S rRNA at the 2'-O position of the ribose in the fully assembled 50S ribosomal subunit. This Stenotrophomonas maltophilia (strain K279a) protein is Ribosomal RNA large subunit methyltransferase E.